We begin with the raw amino-acid sequence, 682 residues long: TBC1 domain family member 23 (682 aa).

Residues 29 to 210 (PVPCDLRTKV…AIWDNYLQQA (182 aa)) enclose the Rab-GAP TBC domain. The Rhodanese domain maps to 318 to 426 (DGVRFFVVDC…GFMALQQHLA (109 aa)).

It localises to the golgi apparatus. It is found in the trans-Golgi network. Its subcellular location is the cytoplasmic vesicle. Its function is as follows. Putative Rab GTPase-activating protein which plays a role in vesicular trafficking. Involved in endosome-to-Golgi trafficking. Acts as a bridging protein by binding simultaneously to golgins, located at the trans-Golgi, and to the WASH complex, located on endosome-derived vesicles. Plays a role in brain development. May act as a general inhibitor of innate immunity signaling. This Xenopus laevis (African clawed frog) protein is TBC1 domain family member 23 (tbc1d23).